An 859-amino-acid chain; its full sequence is MNKAISDLSSHTPMMQQYWKLKNQHLDQLMFYRMGDFYEIFYEDAKKAAKLLDITLTARGQSAGQSIPMCGIPYHAAEGYLAKLVKLGESVVICEQIGDPATSKGPVDRQVVRIITPGTISDEALLDERRDNLIAAVLGDERLFGLAVLDITSGNFSVLEIKGWENLLAELERINPVELLIPDDWPQGLPAEKRRGARRRAPWDFERDSAHKSLCQQFSTQDLKGFGCENLTLAIGAAGCLLSYAKETQRTALPHLRSLRHERLDDTVILDAASRRNLELDTNLSGGRDNTLQSVMDRCQTAMGTRLLTRWLNRPLRDLTILQARQTSITCFLERYRFENLQPQLKEIGDIERILARIGLRNARPRDLARLRDALSALPELQQAMTDLEAPHLQQLAQTASTYPELADLLQRAIIDNPPAVIRDGGVLKTGYDAELDDLQSLSENAGQFLIDLEAREKARTGLANLKVGYNRVHGYFIELPSKQAEQAPADYIRRQTLKGAERFITPELKEFEDKALSAKSRALAREKMLYEALLEDLIGHLAPLQDTAAALAELDVLSNLAERALNLDLNCPRFVAEPCMRIEQGRHPVVEQVLSTPFVANDLALDDSTRMLVITGPNMGGKSTYMRQTALIVLLAHIGSFVPAASCELSLVDRIFTRIGSSDDLAGGRSTFMVEMSETANILHNATDKSLVLMDEVGRGTSTFDGLSLAWAAAECLAQLRAYTLFATHYFELTVLPESEPLVSNVHLNATEHNERIVFLHRVLPGPASQSYGLAVAQLAGVPGKVISRAKEHLQRLETTSLPHEQPRAKPGKPAVPQQSDMFASLPHPVLDELSKVKVDDMTPRQALDLLYTLQTRL.

617 to 624 provides a ligand contact to ATP; sequence GPNMGGKS. The segment at 799 to 821 is disordered; that stretch reads ETTSLPHEQPRAKPGKPAVPQQS.

It belongs to the DNA mismatch repair MutS family.

Its function is as follows. This protein is involved in the repair of mismatches in DNA. It is possible that it carries out the mismatch recognition step. This protein has a weak ATPase activity. The protein is DNA mismatch repair protein MutS of Pseudomonas savastanoi pv. phaseolicola (strain 1448A / Race 6) (Pseudomonas syringae pv. phaseolicola (strain 1448A / Race 6)).